A 1006-amino-acid chain; its full sequence is Probable beta-galactosidase A (1006 aa).

The N-terminal stretch at 1–18 (MKLLSVCAVALLAAQAAG) is a signal peptide. Tyr-96, Asn-140, Ala-141, and Glu-142 together coordinate substrate. Asn-156 carries N-linked (GlcNAc...) asparagine glycosylation. Residue Asn-199 coordinates substrate. The active-site Proton donor is Glu-200. Cysteines 205 and 206 form a disulfide. N-linked (GlcNAc...) asparagine glycosylation occurs at Asn-207. Tyr-260 lines the substrate pocket. A disulfide bridge links Cys-266 with Cys-315. The Nucleophile role is filled by Glu-298. Substrate is bound at residue Tyr-364. N-linked (GlcNAc...) asparagine glycans are attached at residues Asn-373, Asn-402, Asn-422, Asn-622, Asn-777, and Asn-914.

Belongs to the glycosyl hydrolase 35 family.

It localises to the secreted. It catalyses the reaction Hydrolysis of terminal non-reducing beta-D-galactose residues in beta-D-galactosides.. Functionally, cleaves beta-linked terminal galactosyl residues from gangliosides, glycoproteins, and glycosaminoglycans. The sequence is that of Probable beta-galactosidase A (lacA) from Neosartorya fischeri (strain ATCC 1020 / DSM 3700 / CBS 544.65 / FGSC A1164 / JCM 1740 / NRRL 181 / WB 181) (Aspergillus fischerianus).